Reading from the N-terminus, the 185-residue chain is Ribosome-recycling factor (185 aa).

This sequence belongs to the RRF family.

The protein localises to the cytoplasm. Responsible for the release of ribosomes from messenger RNA at the termination of protein biosynthesis. May increase the efficiency of translation by recycling ribosomes from one round of translation to another. This chain is Ribosome-recycling factor, found in Aliarcobacter butzleri (strain RM4018) (Arcobacter butzleri).